The sequence spans 1116 residues: uncharacterized protein (1116 aa).

EF-hand domains follow at residues 8–43 (EEQT…SGLA), 42–77 (LAPQ…VALA), 166–201 (LSTE…INLL), and 292–327 (LPED…IKLK). EH domains lie at 9–106 (EQTA…DSSK), 134–224 (EMTR…AAST), and 259–348 (DLTS…VAPL). Ca(2+)-binding residues include Asp305, Asn307, Asn309, Lys311, and Glu316. 7 disordered regions span residues 360-454 (PSVV…NSPT), 703-774 (SVNL…ASTV), 812-890 (TSLS…NTSA), 909-978 (PFAT…SPQI), 1004-1024 (TTTH…ENQY), 1044-1066 (SNEV…DDEL), and 1095-1116 (QAAE…AGHH). Residues 371–381 (NPNPTLAPNPT) show a composition bias toward pro residues. Positions 401–416 (FSPTLAPQHTSSNATK) are enriched in polar residues. Positions 565–707 (KAQTEQVNRE…EDGLKSVNLT (143 aa)) form a coiled coil. A compositionally biased stretch (polar residues) spans 723–749 (SFTSNGITTDKPTLPDTTSSVPTQHNS). Composition is skewed to low complexity over residues 755–774 (NTLR…ASTV) and 812–827 (TSLS…SLDS). Residues 864 to 890 (SKLTGSARNTAEPVENTSAEPIENTSA) are compositionally biased toward polar residues. Residues 957-969 (EIDDDESSSDEEP) are compositionally biased toward acidic residues. 2 stretches are compositionally biased toward acidic residues: residues 1055-1066 (TANESDNDDDEL) and 1104-1116 (NSST…AGHH).

Its subcellular location is the cytoplasm. The protein resides in the cytoskeleton. This is an uncharacterized protein from Schizosaccharomyces pombe (strain 972 / ATCC 24843) (Fission yeast).